The following is a 187-amino-acid chain: Large ribosomal subunit protein uL22 (187 aa).

Over residues Val159 to Lys171 the composition is skewed to basic and acidic residues. Positions Val159–Phe187 are disordered. Residues Lys172 to Phe187 are compositionally biased toward basic residues.

The protein belongs to the universal ribosomal protein uL22 family.

The sequence is that of Large ribosomal subunit protein uL22 (rpl-17) from Caenorhabditis elegans.